The chain runs to 441 residues: Transcription factor TOXE (441 aa).

Positions 14–40 are basic DNA-binding region; it reads TDINERRKLQNRVAQRKYRTRQKTRMK. The segment at 209–243 is disordered; sequence FEPNDQRKTENLPREPCGSCPSSSHGYSPTSGNPS. Residues 212–221 show a composition bias toward basic and acidic residues; the sequence is NDQRKTENLP. The segment covering 228-241 has biased composition (polar residues); it reads CPSSSHGYSPTSGN. ANK repeat units follow at residues 289–318, 322–351, 355–384, and 413–440; these read DQFS…PLDI, SGKT…EMLA, EGNS…SCRE, and EGMT…SANV.

The protein belongs to the bZIP family. In terms of assembly, monomer.

The protein localises to the nucleus. Functionally, transcription factor, part of the diffuse TOX2 gene cluster that mediates the biosynthesis of the HC-toxin, cyclic tetrapeptide of structure cyclo(D-Pro-L-Ala-D-Ala-L-Aeo), where Aeo stands for 2-amino-9,10-epoxi-8-oxodecanoic acid. HC-toxin is a determinant of specificity and virulence in the interaction between the producing fungus and its host, maize. TOXE is a pathway-specific transcription factor which coordinates the expression of genes involved in HC-toxin biosynthesis. Binds to the tox-box, a 10-bp motif with the consensus 5'-ATCTCNCGNA-3', which is found in the promoter of all genes involved in HC-toxin biosynthesis. Required for pathogenicity of the fungus on maize. This Cochliobolus carbonum (Maize leaf spot fungus) protein is Transcription factor TOXE.